Here is a 179-residue protein sequence, read N- to C-terminus: uncharacterized protein (179 aa).

This sequence belongs to the CAPAB/TerDEXZ family.

This is an uncharacterized protein from Synechocystis sp. (strain ATCC 27184 / PCC 6803 / Kazusa).